The sequence spans 56 residues: Small ribosomal subunit protein uS14 (56 aa).

Zn(2+) is bound by residues Cys21, Cys24, Cys39, and Cys42.

It belongs to the universal ribosomal protein uS14 family. Component of the 40S small ribosomal subunit. Zn(2+) serves as cofactor.

It is found in the cytoplasm. The protein localises to the cytosol. The protein resides in the rough endoplasmic reticulum. The chain is Small ribosomal subunit protein uS14 (RpS29) from Lysiphlebus testaceipes (Greenbugs aphid parastoid).